The chain runs to 220 residues: Vesicle-associated membrane protein 7 (220 aa).

An N-acetylalanine; partial modification is found at Ala2. Residues 2-188 (AILFAVVARG…ARAMCMKNLK (187 aa)) lie on the Cytoplasmic side of the membrane. The Longin domain occupies 7–110 (VVARGTTILA…AMNSEFSSVL (104 aa)). Residues 125–185 (KVMETQAQVD…RNLARAMCMK (61 aa)) form the v-SNARE coiled-coil homology domain. 2 positions are modified to phosphoserine: Ser167 and Ser168. Residues 189–209 (LTIIIIIVSIVFIYIIVSPLC) traverse the membrane as a helical; Anchor for type IV membrane protein segment. Residues 210–220 (GGFTWPSCVKK) are Vesicular-facing.

It belongs to the synaptobrevin family. In terms of assembly, component of the SNARE complex composed of STX4, SNAP23 and VAMP7 that binds SYT7 during lysosomal exocytosis. Component of the SNARE complex composed of STX7, STX8, VAMP7 and VTI1B that is required for heterotypic fusion of late endosomes with lysosomes. May interact with STX17. Interacts with PICALM. Interacts with RAB21. In terms of tissue distribution, detected in all tissues tested.

The protein localises to the cytoplasmic vesicle. The protein resides in the secretory vesicle membrane. It localises to the golgi apparatus. It is found in the trans-Golgi network membrane. Its subcellular location is the late endosome membrane. The protein localises to the lysosome membrane. The protein resides in the endoplasmic reticulum membrane. It localises to the phagosome membrane. It is found in the synapse. Its subcellular location is the synaptosome. Its function is as follows. Involved in the targeting and/or fusion of transport vesicles to their target membrane during transport of proteins from the early endosome to the lysosome. Required for heterotypic fusion of late endosomes with lysosomes and homotypic lysosomal fusion. Required for calcium regulated lysosomal exocytosis. Involved in the export of chylomicrons from the endoplasmic reticulum to the cis Golgi. Required for exocytosis of mediators during eosinophil and neutrophil degranulation, and target cell killing by natural killer cells. Required for focal exocytosis of late endocytic vesicles during phagosome formation. This is Vesicle-associated membrane protein 7 (VAMP7) from Homo sapiens (Human).